A 629-amino-acid polypeptide reads, in one-letter code: Phosphomethylpyrimidine synthase (629 aa).

Residues 1–30 form a disordered region; it reads MTTKLKNASNLSESAQVDQQSVQPFTRSQK. Substrate-binding positions include Asn233, Met262, Tyr291, His327, 347–349, 388–391, and Glu427; these read SRG and DGLR. Position 431 (His431) interacts with Zn(2+). Position 454 (Tyr454) interacts with substrate. Zn(2+) is bound at residue His495. Cys575, Cys578, and Cys583 together coordinate [4Fe-4S] cluster.

This sequence belongs to the ThiC family. As to quaternary structure, homodimer. Requires [4Fe-4S] cluster as cofactor.

It carries out the reaction 5-amino-1-(5-phospho-beta-D-ribosyl)imidazole + S-adenosyl-L-methionine = 4-amino-2-methyl-5-(phosphooxymethyl)pyrimidine + CO + 5'-deoxyadenosine + formate + L-methionine + 3 H(+). It participates in cofactor biosynthesis; thiamine diphosphate biosynthesis. In terms of biological role, catalyzes the synthesis of the hydroxymethylpyrimidine phosphate (HMP-P) moiety of thiamine from aminoimidazole ribotide (AIR) in a radical S-adenosyl-L-methionine (SAM)-dependent reaction. The polypeptide is Phosphomethylpyrimidine synthase (Pseudomonas fluorescens (strain ATCC BAA-477 / NRRL B-23932 / Pf-5)).